Reading from the N-terminus, the 33-residue chain is Pardaxin P-5 (33 aa).

The protein belongs to the pardaxin family. Monomer. In aqueous solution exists as a tetramer.

The protein localises to the secreted. It is found in the target cell membrane. Its function is as follows. Exhibits unusual shark repellent and surfactant properties. Forms voltage-dependent, ion-permeable channels in membranes. At high concentration causes cell membrane lysis. The polypeptide is Pardaxin P-5 (Pardachirus marmoratus (Finless sole)).